The following is a 340-amino-acid chain: Photosystem II protein D1 (340 aa).

3 helical membrane passes run 25-42 (YIGW…LATV), 114-129 (HFFL…EWEF), and 138-152 (WIFV…AAAA). A chlorophyll a-binding site is contributed by histidine 114. Tryptophan 122 is a binding site for pheophytin a. Residues aspartate 166 and glutamate 185 each contribute to the [CaMn4O5] cluster site. Residues 193 to 214 (FHILGVAGVFGGSLFSAMHGSL) traverse the membrane as a helical segment. Histidine 194 contributes to the chlorophyll a binding site. Residues histidine 211 and 260–261 (SF) each bind a quinone. Histidine 211 contacts Fe cation. Histidine 268 is a Fe cation binding site. The helical transmembrane segment at 270 to 284 (FLAAWPVIGIWFTSL) threads the bilayer. Residues histidine 328, glutamate 329, aspartate 338, and alanine 340 each coordinate [CaMn4O5] cluster.

Belongs to the reaction center PufL/M/PsbA/D family. As to quaternary structure, PSII is composed of 1 copy each of membrane proteins PsbA, PsbB, PsbC, PsbD, PsbE, PsbF, PsbH, PsbI, PsbJ, PsbK, PsbL, PsbM, PsbT, PsbX, PsbY, PsbZ, Psb30/Ycf12, at least 3 peripheral proteins of the oxygen-evolving complex and a large number of cofactors. It forms dimeric complexes. It depends on The D1/D2 heterodimer binds P680, chlorophylls that are the primary electron donor of PSII, and subsequent electron acceptors. It shares a non-heme iron and each subunit binds pheophytin, quinone, additional chlorophylls, carotenoids and lipids. D1 provides most of the ligands for the Mn4-Ca-O5 cluster of the oxygen-evolving complex (OEC). There is also a Cl(-1) ion associated with D1 and D2, which is required for oxygen evolution. The PSII complex binds additional chlorophylls, carotenoids and specific lipids. as a cofactor. In terms of processing, tyr-157 forms a radical intermediate that is referred to as redox-active TyrZ, YZ or Y-Z.

Its subcellular location is the plastid. It localises to the chloroplast thylakoid membrane. It catalyses the reaction 2 a plastoquinone + 4 hnu + 2 H2O = 2 a plastoquinol + O2. Photosystem II (PSII) is a light-driven water:plastoquinone oxidoreductase that uses light energy to abstract electrons from H(2)O, generating O(2) and a proton gradient subsequently used for ATP formation. It consists of a core antenna complex that captures photons, and an electron transfer chain that converts photonic excitation into a charge separation. The D1/D2 (PsbA/PsbD) reaction center heterodimer binds P680, the primary electron donor of PSII as well as several subsequent electron acceptors. In Amphidinium operculatum (Dinoflagellate), this protein is Photosystem II protein D1.